The chain runs to 259 residues: Troponin T, fast skeletal muscle (259 aa).

Acidic residues predominate over residues 1-36 (MSDEETEQVEEQYEEEEEAQEEEVQEEAPEPEEVQE). Residues 1 to 62 (MSDEETEQVE…EKVDFDDIQK (62 aa)) are disordered. Position 2 is an N-acetylserine (Ser2). At Ser2 the chain carries Phosphoserine. The segment covering 50–62 (PEGEKVDFDDIQK) has biased composition (basic and acidic residues). Ser78 is modified (phosphoserine). Positions 101 to 143 (RAERAEQQRIRAEKERERQNRLAEEKARREEEDAKRRAEDDLK) are enriched in basic and acidic residues. The segment at 101-180 (RAERAEQQRI…TAREMKKKIL (80 aa)) is disordered. 3 positions are modified to phosphoserine: Ser149, Ser156, and Ser157. Positions 171 to 180 (TAREMKKKIL) are enriched in basic and acidic residues. Ser193 bears the Phosphoserine mark. Tyr209 carries the phosphotyrosine modification. The disordered stretch occupies residues 235-259 (RIDQAQKHSKKAGATAKGKVGGRWK).

The protein belongs to the troponin T family.

Functionally, troponin T is the tropomyosin-binding subunit of troponin, the thin filament regulatory complex which confers calcium-sensitivity to striated muscle actomyosin ATPase activity. The polypeptide is Troponin T, fast skeletal muscle (Tnnt3) (Rattus norvegicus (Rat)).